The following is a 1245-amino-acid chain: TAL effector protein Brg11 (1245 aa).

Disordered stretches follow at residues 1 to 87 (MRIG…LVPE) and 173 to 205 (CPQAFASPPRAPRSARARRARTGGDAWPAPTFL). Residues 67-87 (PRRPLPVAPASAPPAPSLVPE) are compositionally biased toward pro residues. The short motif at 185–191 (RSARARR) is the Nuclear localization signal 1 element. Residues 286-320 (LTRAHIVDIARQRSGDLALQALLPVATALTAAPLR) form a Cryptic repeat -1 repeat. The stretch at 321 to 354 (LSASQIATVAQYGERPAIQALYRLRRKLTRAPLH) is one Cryptic repeat 0 repeat. Core repeat repeat units follow at residues 355-389 (LTPQQVVAIASNTGGKRALEAVCVQLPVLRAAPYR), 390-424 (LSTEQVVAIASNKGGKQALEAVKAHLLDLLGAPYV), 425-459 (LDTEQVVAIASHNGGKQALEAVKADLLDLRGAPYA), 460-494 (LSTEQVVAIASHNGGKQALEAVKADLLELRGAPYA), 495-529 (LSTEQVVAIASHNGGKQALEAVKAHLLDLRGVPYA), 530-564 (LSTEQVVAIASHNGGKQALEAVKAQLLDLRGAPYA), 565-599 (LSTAQVVAIASNGGGKQALEGIGEQLLKLRTAPYG), 600-634 (LSTEQVVAIASHDGGKQALEAVGAQLVALRAAPYA), 635-669 (LSTEQVVAIASNKGGKQALEAVKAQLLELRGAPYA), 670-704 (LSTAQVVAIASHDGGNQALEAVGTQLVALRAAPYA), 705-739 (LSTEQVVAIASHDGGKQALEAVGAQLVALRAAPYA), 740-774 (LNTEQVVAIASSHGGKQALEAVRALFPDLRAAPYA), 775-809 (LSTAQLVAIASNPGGKQALEAVRALFRELRAAPYA), 810-844 (LSTEQVVAIASNHGGKQALEAVRALFRGLRAAPYG), 845-879 (LSTAQVVAIASSNGGKQALEAVWALLPVLRATPYD), and 880-914 (LNTAQIVAIASHDGGKPALEAVWAKLPVLRGAPYA). A Cryptic repeat +1 repeat occupies 915 to 948 (LSTAQVVAIACISGQQALEAIEAHMPTLRQASHS). The stretch at 949–982 (LSPERVAAIACIGGRSAVEAVRQGLPVKAIRRIR) is one Cryptic repeat +2 repeat. Short sequence motifs (nuclear localization signal) lie at residues 980–983 (RIRR), 1108–1111 (HRKR), and 1145–1148 (RRKR). The segment at 1096–1138 (SPGMAGQSACSPHRKRPAETAIAPRSIRRSPNNAGQPSEPWPD) is disordered. Residues 1237-1245 (DWLLQILET) are activation domain.

It belongs to the transcription activator-like effector (TALE) family. RipTAL/RTL subfamily.

Its subcellular location is the secreted. It is found in the host nucleus. Its function is as follows. Exported into plant cells, where it is targeted to the nucleus and probably acts as a transcription factor. Binds DNA in a sequence-specific manner. May contribute to plant pathogenicity. In Ralstonia nicotianae (strain ATCC BAA-1114 / GMI1000) (Ralstonia solanacearum), this protein is TAL effector protein Brg11.